The chain runs to 282 residues: Glucuronoxylan 4-O-methyltransferase 1 (282 aa).

Residues 13–33 form a helical membrane-spanning segment; it reads VLLVFLLATLILIFIVRSTLT.

This sequence belongs to the methyltransferase superfamily. Expressed in rosette leaves, stems, flowers and siliques.

The protein resides in the golgi apparatus membrane. The catalysed reaction is glucuronoxylan D-glucuronate + n S-adenosyl-L-methionine = glucuronoxylan 4-O-methyl-D-glucuronate + n S-adenosyl-L-homocysteine + n H(+). In terms of biological role, methyltransferase catalyzing 4-O-methylation of glucuronic acid side chains on xylan. In Arabidopsis thaliana (Mouse-ear cress), this protein is Glucuronoxylan 4-O-methyltransferase 1 (GXM1).